The primary structure comprises 163 residues: Nucleotide-binding protein CYB_0891 (163 aa).

Belongs to the YajQ family.

Its function is as follows. Nucleotide-binding protein. This is Nucleotide-binding protein CYB_0891 from Synechococcus sp. (strain JA-2-3B'a(2-13)) (Cyanobacteria bacterium Yellowstone B-Prime).